The chain runs to 66 residues: Large ribosomal subunit protein bL33c (66 aa).

It belongs to the bacterial ribosomal protein bL33 family.

It is found in the plastid. The protein localises to the chloroplast. The polypeptide is Large ribosomal subunit protein bL33c (Cucumis sativus (Cucumber)).